We begin with the raw amino-acid sequence, 221 residues long: Uracil-DNA glycosylase (221 aa).

The Proton acceptor role is filled by Asp-64.

It belongs to the uracil-DNA glycosylase (UDG) superfamily. UNG family.

The protein localises to the cytoplasm. It catalyses the reaction Hydrolyzes single-stranded DNA or mismatched double-stranded DNA and polynucleotides, releasing free uracil.. Its function is as follows. Excises uracil residues from the DNA which can arise as a result of misincorporation of dUMP residues by DNA polymerase or due to deamination of cytosine. This is Uracil-DNA glycosylase from Mycoplasmopsis pulmonis (strain UAB CTIP) (Mycoplasma pulmonis).